The following is a 149-amino-acid chain: F420H(2)-dependent quinone reductase MT1299 (149 aa).

Coenzyme F420-(gamma-Glu)n contacts are provided by residues alanine 48–threonine 50, arginine 54–threonine 59, valine 70–lysine 73, glycine 81–asparagine 85, and tyrosine 130.

This sequence belongs to the F420H(2)-dependent quinone reductase family.

It localises to the cell membrane. It carries out the reaction oxidized coenzyme F420-(gamma-L-Glu)(n) + a quinol + H(+) = reduced coenzyme F420-(gamma-L-Glu)(n) + a quinone. Involved in a F420-dependent anti-oxidant mechanism that protects M.tuberculosis against oxidative stress and bactericidal agents. Catalyzes the F420H(2)-dependent two-electron reduction of quinones to dihydroquinones, thereby preventing the formation of cytotoxic semiquinones obtained by the one-electron reduction pathway. In vitro, catalyzes the reduction of menadione to menadiol; since menaquinone is the sole quinone electron carrier in the respiratory chain in M.tuberculosis, the physiological electron acceptor for Fqr-mediated F420H(2) oxidation is therefore likely to be the endogenous menaquinone found in the membrane fraction of M.tuberculosis. In Mycobacterium tuberculosis (strain CDC 1551 / Oshkosh), this protein is F420H(2)-dependent quinone reductase MT1299.